The sequence spans 358 residues: sn-glycerol-3-phosphate import ATP-binding protein UgpC (358 aa).

The region spanning 4 to 235 (VELKQVRKTY…PATLFVASFI (232 aa)) is the ABC transporter domain. 37–44 (GPSGCGKS) is an ATP binding site.

Belongs to the ABC transporter superfamily. sn-glycerol-3-phosphate importer (TC 3.A.1.1.3) family. In terms of assembly, the complex is composed of two ATP-binding proteins (UgpC), two transmembrane proteins (UgpA and UgpE) and a solute-binding protein (UgpB).

Its subcellular location is the cell inner membrane. The enzyme catalyses sn-glycerol 3-phosphate(out) + ATP + H2O = sn-glycerol 3-phosphate(in) + ADP + phosphate + H(+). Part of the ABC transporter complex UgpBAEC involved in sn-glycerol-3-phosphate (G3P) import. Responsible for energy coupling to the transport system. This chain is sn-glycerol-3-phosphate import ATP-binding protein UgpC, found in Roseobacter denitrificans (strain ATCC 33942 / OCh 114) (Erythrobacter sp. (strain OCh 114)).